The primary structure comprises 613 residues: Glucose-6-phosphate isomerase 1, chloroplastic (613 aa).

Positions 1-14 (MASLSGLYSSSPSL) are enriched in low complexity. The disordered stretch occupies residues 1–21 (MASLSGLYSSSPSLKPAKNHS). A chloroplast-targeting transit peptide spans 1-48 (MASLSGLYSSSPSLKPAKNHSFKALPAQSRDSFSFPHTSKPTNLPLTL). Residue glutamate 392 is the Proton donor of the active site. Residues histidine 421 and lysine 526 contribute to the active site. Position 595 is a phosphoserine (serine 595).

It belongs to the GPI family.

The protein localises to the plastid. It is found in the chloroplast stroma. The catalysed reaction is alpha-D-glucose 6-phosphate = beta-D-fructose 6-phosphate. The protein operates within carbohydrate degradation; glycolysis; D-glyceraldehyde 3-phosphate and glycerone phosphate from D-glucose: step 2/4. It functions in the pathway carbohydrate biosynthesis; gluconeogenesis. Its activity is regulated as follows. Inhibited by glycerol-3-P (G3P). Functionally, promotes the synthesis of starch in leaves. This Arabidopsis thaliana (Mouse-ear cress) protein is Glucose-6-phosphate isomerase 1, chloroplastic (PGI1).